Reading from the N-terminus, the 191-residue chain is MPPKFWIIIIVKKIDQQSLENAYRLFESGDIHQIEIGSTKGLQQIHHYLFNGLYEFAGKIREQNISKGHFRFANALYLKEALGKIEQMPEDTFENIINKYVEMNIAHPFLEGNGRSTRIWLDLVLKKHLGKVVNWQNVDKTQYLQAMERSPINDLEIRFLLQANLTDDVNNREIIFKGIEQSYYYEGYEKE.

A Fido domain is found at G37–Q162. ATP-binding positions include K67 to G68, G112 to G114, R118, and Q145.

This sequence belongs to the fic family.

The catalysed reaction is L-tyrosyl-[protein] + ATP = O-(5'-adenylyl)-L-tyrosyl-[protein] + diphosphate. The enzyme catalyses L-threonyl-[protein] + ATP = 3-O-(5'-adenylyl)-L-threonyl-[protein] + diphosphate. Probable adenylyltransferase that mediates the addition of adenosine 5'-monophosphate (AMP) to specific residues of target proteins. The chain is Probable protein adenylyltransferase HI_0977 from Haemophilus influenzae (strain ATCC 51907 / DSM 11121 / KW20 / Rd).